Consider the following 414-residue polypeptide: Paired box protein Pax-2 (414 aa).

Positions 15–141 (RHGGVNQLGG…SSINRIIRTK (127 aa)) form a DNA-binding region, paired. The tract at residues 18–74 (GVNQLGGVFVNGRPLPDVVRQRIVELAHQGVRPCDISRQLRVSHGCVSKILGRYYET) is PAI subdomain. Residues 93–141 (KVVDKIAEYKRQNPTMFAWEIRDRLLAEGICDNDTVPSVSSINRIIRTK) form an RED subdomain region. Position 225 is a phosphothreonine (Thr-225).

As to quaternary structure, interacts with ELGN3; the interaction targets PAX2 for destruction. Interacts with TLE4. As to expression, kidney and nephrogenic rests.

It localises to the nucleus. Transcription factor that may have a role in kidney cell differentiation. This Mus musculus (Mouse) protein is Paired box protein Pax-2 (Pax2).